A 599-amino-acid chain; its full sequence is DNA primase (599 aa).

The CHC2-type zinc-finger motif lies at 38 to 62; that stretch reads CPFHDEKTPSFTVSEDKQICHCFGC. Residues 260-341 form the Toprim domain; that stretch reads DEIVLLEGFM…NVFVIQLPSG (82 aa). Positions 266, 310, and 312 each coordinate Mg(2+).

Belongs to the DnaG primase family. In terms of assembly, monomer. Interacts with DnaB. Requires Zn(2+) as cofactor. Mg(2+) is required as a cofactor.

The enzyme catalyses ssDNA + n NTP = ssDNA/pppN(pN)n-1 hybrid + (n-1) diphosphate.. Its function is as follows. RNA polymerase that catalyzes the synthesis of short RNA molecules used as primers for DNA polymerase during DNA replication. The protein is DNA primase of Staphylococcus aureus (strain COL).